We begin with the raw amino-acid sequence, 372 residues long: MALNDFHVSEPYTLGIELEMQVINPPGYDLSQDSSTLIDAVKPQLTAGEIKHDITESMLEMATGVCRDIDQAAAQLSAMQHVILQAASEHHLGICGGGTHPFQKWQRQEVCDNERYQRTLENFGYLIQQATVFGQHVHVGCANGDDAIYLLHGLSHFVPHFIALSAASPYMQGADTRFACARLNIFSAFPDNGPMPWVSNWQEFTGLFRRLSYTTMIDSIKDLHWDIRPSPAFGTVEVRVMDTPLTLDHAINMAGLIQATAHWLLTERPFKPQEQDYLLYKFNRFQACRYGLESVLIDVYTGDRRRLADDTLRLLDNVTLSARKLGADSAIDALRLQVKKGGNEAQYMREFIADGGSLIGLVQKHCEIWAGQ.

The protein belongs to the glutamate--cysteine ligase type 2 family. YbdK subfamily. As to quaternary structure, homodimer.

It catalyses the reaction L-cysteine + L-glutamate + ATP = gamma-L-glutamyl-L-cysteine + ADP + phosphate + H(+). ATP-dependent carboxylate-amine ligase which exhibits weak glutamate--cysteine ligase activity. This chain is Putative glutamate--cysteine ligase 2 (ybdK), found in Salmonella paratyphi A (strain AKU_12601).